The primary structure comprises 427 residues: 3-phosphoshikimate 1-carboxyvinyltransferase (427 aa).

Lys22, Ser23, and Arg27 together coordinate 3-phosphoshikimate. Lys22 contacts phosphoenolpyruvate. Gly94 and Arg122 together coordinate phosphoenolpyruvate. Residues Ser165, Gln167, Asp313, and Lys340 each contribute to the 3-phosphoshikimate site. Gln167 is a phosphoenolpyruvate binding site. The active-site Proton acceptor is the Asp313. Phosphoenolpyruvate is bound by residues Arg344 and Arg386.

It belongs to the EPSP synthase family. Monomer.

It is found in the cytoplasm. The enzyme catalyses 3-phosphoshikimate + phosphoenolpyruvate = 5-O-(1-carboxyvinyl)-3-phosphoshikimate + phosphate. It participates in metabolic intermediate biosynthesis; chorismate biosynthesis; chorismate from D-erythrose 4-phosphate and phosphoenolpyruvate: step 6/7. Catalyzes the transfer of the enolpyruvyl moiety of phosphoenolpyruvate (PEP) to the 5-hydroxyl of shikimate-3-phosphate (S3P) to produce enolpyruvyl shikimate-3-phosphate and inorganic phosphate. This Koribacter versatilis (strain Ellin345) protein is 3-phosphoshikimate 1-carboxyvinyltransferase.